Consider the following 473-residue polypeptide: Photosystem II CP43 reaction center protein (473 aa).

Positions 1 to 14 are excised as a propeptide; it reads MKTLYSLRRSYPVE. Thr-15 bears the N-acetylthreonine mark. Thr-15 carries the phosphothreonine modification. 5 helical membrane passes run 69 to 93, 134 to 155, 178 to 200, 255 to 275, and 291 to 312; these read LFEV…PHLA, LIGP…KDRN, KALY…RKIT, KPFA…LSYS, and WFNN…ASQA. Glu-367 contacts [CaMn4O5] cluster. A helical membrane pass occupies residues 447 to 471; it reads RARAAAAGFEKGIDRDFEPVLSMTP.

This sequence belongs to the PsbB/PsbC family. PsbC subfamily. In terms of assembly, PSII is composed of 1 copy each of membrane proteins PsbA, PsbB, PsbC, PsbD, PsbE, PsbF, PsbH, PsbI, PsbJ, PsbK, PsbL, PsbM, PsbT, PsbX, PsbY, PsbZ, Psb30/Ycf12, at least 3 peripheral proteins of the oxygen-evolving complex and a large number of cofactors. It forms dimeric complexes. Binds multiple chlorophylls and provides some of the ligands for the Ca-4Mn-5O cluster of the oxygen-evolving complex. It may also provide a ligand for a Cl- that is required for oxygen evolution. PSII binds additional chlorophylls, carotenoids and specific lipids. is required as a cofactor.

It localises to the plastid. It is found in the chloroplast thylakoid membrane. Functionally, one of the components of the core complex of photosystem II (PSII). It binds chlorophyll and helps catalyze the primary light-induced photochemical processes of PSII. PSII is a light-driven water:plastoquinone oxidoreductase, using light energy to abstract electrons from H(2)O, generating O(2) and a proton gradient subsequently used for ATP formation. The polypeptide is Photosystem II CP43 reaction center protein (Abies alba (Edeltanne)).